Reading from the N-terminus, the 188-residue chain is Adenylate kinase (188 aa).

An ATP-binding site is contributed by 11-16; that stretch reads GAGKGT. An NMP region spans residues 31–60; that stretch reads STGDIFRANIKDQTELGREAQRYTDAGNLV. Residues threonine 32, arginine 37, 58–60, 86–89, and glutamine 93 contribute to the AMP site; these read NLV and GYPR. The LID stretch occupies residues 127 to 137; it reads GRAQEQGRTDD. Arginine 128 contacts ATP. AMP-binding residues include arginine 134 and arginine 145. Glycine 173 contacts ATP.

The protein belongs to the adenylate kinase family. In terms of assembly, monomer.

The protein localises to the cytoplasm. The catalysed reaction is AMP + ATP = 2 ADP. The protein operates within purine metabolism; AMP biosynthesis via salvage pathway; AMP from ADP: step 1/1. Catalyzes the reversible transfer of the terminal phosphate group between ATP and AMP. Plays an important role in cellular energy homeostasis and in adenine nucleotide metabolism. The chain is Adenylate kinase from Kocuria rhizophila (strain ATCC 9341 / DSM 348 / NBRC 103217 / DC2201).